The following is a 70-amino-acid chain: Toxin Boma6d (70 aa).

The region spanning 2-68 (RDAYIAQNYN…VPIKVEGKCH (67 aa)) is the LCN-type CS-alpha/beta domain. Disulfide bonds link Cys12–Cys67, Cys16–Cys40, Cys22–Cys50, and Cys26–Cys52.

This sequence belongs to the long (4 C-C) scorpion toxin superfamily. Sodium channel inhibitor family. Alpha subfamily. As to expression, expressed by the venom gland.

The protein localises to the secreted. Its function is as follows. Alpha toxins bind voltage-independently at site-3 of sodium channels (Nav) and inhibit the inactivation of the activated channels, thereby blocking neuronal transmission. The protein is Toxin Boma6d of Buthus occitanus mardochei (Moroccan scorpion).